The primary structure comprises 1354 residues: MPAYFQRPENALKRANEFLEVGKKQPALDVLYDVMKSKKHRTWQKIHEPIMLKYLELCVDLRKSHLAKEGLYQYKNICQQVNIKSLEDVVRAYLKLAEEKTEAAKEESQQMVLDIEDLDNIQTPESVLLSAVSGEDTQDRTDRLLLTPWVKFLWESYRQCLDLLRNNSRVERLYHDIAQQAFKFCLQYTRKAEFRKLCDNLRMHLSQIQRHHNQSTAINLNNPESQSMHLETRLVQLDSAISMELWQEAFKAVEDIHGLFSLSKKPPKPQLMANYYNKVSTVFWKSGNALFHASTLHRLYHLSREMRKNLTQDEMQRMSTRVLLATLSIPITPERTDIARLLDMDGIIVEKQRRLATLLGLQAPPTRIGLINDMVRFNVLQYVVPEVKDLYNWLEVEFNPLKLCERVTKVLNWVREQPEKEPELQQYVPQLQNNTILRLLQQVAQIYQSIEFSRLTSLVPFVDAFQLERAIVDAARHCDLQVRIDHTSRTLSFGSDLNYATREDAPIGPHLQSMPSEQIRNQLTAMSSVLAKALEVIKPAHILQEKEEQHQLAVTAYIKNSRKEHQRILARRQTIEERKERLESLNIQREKEELEQREAELQKVRKAEEERLRQEAKEREKERILQEHEQIKKKTVRERLEQIKKTELGAKAFKDIDIEDLEELDPDFIMAKQVEQLEKEKKELQERLKNQEKKIDYFERAKRLEEIPLIKSAYEEQRVKDMDLWEQQEEERITTMQLEREKALEHKNRMSRMLEDRDLFVMRLKAARQSVYEEKLKQFEERLAEERHNRLEERKRQRKEERKITYYREKEEEEQRRAEEQMLKEREERERAERAKREEELREYQERVKKLEEVERKKRQRELEIEERERRREEERRLGEDPLSRKDSRWGDRDSEGTWRKGPEADSEWRRGPPEKEWRRETRDDERPHRRDEDRLRRLGGDDEERESSLRPDDDRIPRRGLDDDRGPRRGPDEDRFSRRGTDDDRPSWRNADDDRPPRRIGDDDRGSWRHTDDDRPPRRGLDDDRPPRRGLDDERGSWRTAEEDRGPRRGMDDDRGPRRGGADDERSSWRNADDDRGPRRGMDDDRGPRRGLDDDRGPWRNAAEDRISRRGADDDRGPWRNMDDDRVPRRGDDARPGPWRPFVKPGGWREKEKAREESWGPPRESRPPEEREWDRDKEKDRDNQDREENDKDLERDRDRERDGDREDRFRRPRDEGGWRRGPAEESSSWRDSSRRDDRDRDDRRRDRDDRRDLRDLRDRRDLRDDRDRRGPPLRSEREEASSWRRTDDRKDDRTEERDPPRRVPPPTLSRERERERDREGEKEKASWRAEKDRESLRRTKNETDEDGWTTVRR.

Lysine 68 bears the N6-acetyllysine mark. A coiled-coil region spans residues 82–120; that stretch reads NIKSLEDVVRAYLKLAEEKTEAAKEESQQMVLDIEDLDN. In terms of domain architecture, PCI spans 315–498; it reads MQRMSTRVLL…RTLSFGSDLN (184 aa). Phosphoserine occurs at positions 492 and 584. Residues 664 to 835 are interaction with EIF3B; that stretch reads LDPDFIMAKQ…REERERAERA (172 aa). 3 disordered regions span residues 809–844, 866–1249, and 1262–1354; these read EKEE…LREY, EERE…RDRD, and DLRD…TVRR. Composition is skewed to basic and acidic residues over residues 866-1136, 1148-1249, 1262-1302, and 1310-1343; these read EERE…DDAR, GWRE…RDRD, DLRD…DPPR, and SRER…TKNE. Serine 895 is modified (phosphoserine). The 1; truncated repeat unit spans residues 924 to 931; sequence DDERPHRR. A 22 X 10 AA approximate tandem repeats of [DA]-[DE]-[ED]-R-[PLIGFSV]-[RPS]-[RW]-[RL]-[GNIHT]-[DGLPTAM] region spans residues 924 to 1143; the sequence is DDERPHRRDE…DARPGPWRPF (220 aa). Residues 932 to 941 form repeat 2; the sequence is DEDRLRRLGG. One copy of the 3; approximate repeat lies at 942–951; sequence DDEERESSLR. Serine 949 carries the post-translational modification Phosphoserine. 18 tandem repeats follow at residues 953–962, 963–972, 973–982, 983–992, 993–1002, 1003–1012, 1013–1022, 1023–1032, 1033–1042, 1043–1052, 1053–1062, 1064–1073, 1074–1083, 1084–1093, 1094–1103, 1104–1113, 1114–1123, and 1124–1133. Serine 1038 carries the post-translational modification Phosphoserine. One copy of the 22; approximate repeat lies at 1134–1143; the sequence is DARPGPWRPF. Serine 1159 and serine 1233 each carry phosphoserine. 2 positions are modified to phosphoserine: serine 1310 and serine 1336.

The protein belongs to the eIF-3 subunit A family. In terms of assembly, component of the eukaryotic translation initiation factor 3 (eIF-3) complex, which is composed of 13 subunits: EIF3A, EIF3B, EIF3C, EIF3D, EIF3E, EIF3F, EIF3G, EIF3H, EIF3I, EIF3J, EIF3K, EIF3L and EIF3M. The eIF-3 complex appears to include 3 stable modules: module A is composed of EIF3A, EIF3B, EIF3G and EIF3I; module B is composed of EIF3F, EIF3H, and EIF3M; and module C is composed of EIF3C, EIF3D, EIF3E, EIF3L and EIF3K. EIF3C of module C binds EIF3B of module A and EIF3H of module B, thereby linking the three modules. EIF3J is a labile subunit that binds to the eIF-3 complex via EIF3B. The eIF-3 complex interacts with RPS6KB1 under conditions of nutrient depletion. Mitogenic stimulation leads to binding and activation of a complex composed of MTOR and RPTOR, leading to phosphorylation and release of RPS6KB1 and binding of EIF4B to eIF-3. Interacts with EIF4G1. Also interacts with KRT7 and PIWIL2. Phosphorylated. Phosphorylation is enhanced upon serum stimulation.

The protein localises to the cytoplasm. In terms of biological role, RNA-binding component of the eukaryotic translation initiation factor 3 (eIF-3) complex, which is required for several steps in the initiation of protein synthesis. The eIF-3 complex associates with the 40S ribosome and facilitates the recruitment of eIF-1, eIF-1A, eIF-2:GTP:methionyl-tRNAi and eIF-5 to form the 43S pre-initiation complex (43S PIC). The eIF-3 complex stimulates mRNA recruitment to the 43S PIC and scanning of the mRNA for AUG recognition. The eIF-3 complex is also required for disassembly and recycling of post-termination ribosomal complexes and subsequently prevents premature joining of the 40S and 60S ribosomal subunits prior to initiation. The eIF-3 complex specifically targets and initiates translation of a subset of mRNAs involved in cell proliferation, including cell cycling, differentiation and apoptosis, and uses different modes of RNA stem-loop binding to exert either translational activation or repression. This is Eukaryotic translation initiation factor 3 subunit A (Eif3a) from Rattus norvegicus (Rat).